A 333-amino-acid chain; its full sequence is Holliday junction branch migration complex subunit RuvB (333 aa).

Residues 1–181 form a large ATPase domain (RuvB-L) region; sequence MARILDNDLL…FGINGHMEYY (181 aa). ATP-binding positions include Leu20, Arg21, Gly62, Lys65, Thr66, Thr67, 128–130, Arg171, Tyr181, and Arg218; that span reads EDY. A Mg(2+)-binding site is contributed by Thr66. A presensor-1 beta-hairpin region spans residues 130 to 148; it reads YYIDIMIGAGETSRSVHLD. Residues 182 to 252 are small ATPAse domain (RuvB-S); that stretch reads ELPDLTEIVE…IADQALTMLD (71 aa). Residues 255 to 333 form a head domain (RuvB-H) region; sequence HEGLDYVDQK…HMGYDYTRDN (79 aa). Residues Arg291, Arg310, Arg312, and Arg315 each coordinate DNA.

The protein belongs to the RuvB family. As to quaternary structure, homohexamer. Forms an RuvA(8)-RuvB(12)-Holliday junction (HJ) complex. HJ DNA is sandwiched between 2 RuvA tetramers; dsDNA enters through RuvA and exits via RuvB. Only 4 subunits contact one DNA strand at any time. Two adjacent subunits are contacted by domain III of RuvA. An RuvB hexamer assembles on each DNA strand where it exits the tetramer. Each RuvB hexamer is contacted by two RuvA subunits (via domain III) on 2 adjacent RuvB subunits; this complex drives branch migration. In the full resolvosome a probable DNA-RuvA(4)-RuvB(12)-RuvC(2) complex forms which resolves the HJ.

The protein resides in the cytoplasm. It carries out the reaction ATP + H2O = ADP + phosphate + H(+). With respect to regulation, binding of domain III of RuvA to a single subunit of the RuvB hexamer activates the ATPase 2 subunits away and nucleotide exchange in the adjacent subunit. In terms of biological role, the RuvA-RuvB-RuvC complex processes Holliday junction (HJ) DNA during genetic recombination and DNA repair, while the RuvA-RuvB complex plays an important role in the rescue of blocked DNA replication forks via replication fork reversal (RFR). Catalyzes branch migration on Holliday junction (HJ) DNA in complex with RuvA from S.typhimurim and ATP. RuvA specifically binds to HJ cruciform DNA, conferring on it an open structure. The RuvB hexamer acts as an ATP-dependent pump, pulling dsDNA into and through the RuvAB complex. Forms 2 homohexamers on either side of HJ DNA bound by 1 or 2 RuvA tetramers; 4 subunits per hexamer contact DNA at a time. Coordinated motions by a converter formed by DNA-disengaged RuvB subunits stimulates ATP hydrolysis and nucleotide exchange. Immobilization of the converter enables RuvB to convert the ATP-contained energy into a lever motion, pulling 2 nucleotides of DNA out of the RuvA tetramer per ATP hydrolyzed, thus driving DNA branch migration. The RuvB motors rotate together with the DNA substrate, which together with the progressing nucleotide cycle forms the mechanistic basis for DNA recombination by continuous branch migration. Branch migration allows RuvC to scan DNA until it finds its consensus sequence, where it cleaves and resolves cruciform DNA. This chain is Holliday junction branch migration complex subunit RuvB, found in Streptococcus thermophilus (strain ATCC BAA-250 / LMG 18311).